The chain runs to 327 residues: Probable cell division protein WhiA (327 aa).

The segment at residues 275-308 is a DNA-binding region (H-T-H motif); it reads SLEELGRLADPPMTKDAVAGRIRRLLSMADRKAK.

Belongs to the WhiA family.

Functionally, involved in cell division and chromosome segregation. This is Probable cell division protein WhiA from Mycobacterium leprae (strain Br4923).